Consider the following 467-residue polypeptide: ATP synthase subunit beta (467 aa).

156 to 163 (GGAGVGKT) is a binding site for ATP.

Belongs to the ATPase alpha/beta chains family. F-type ATPases have 2 components, CF(1) - the catalytic core - and CF(0) - the membrane proton channel. CF(1) has five subunits: alpha(3), beta(3), gamma(1), delta(1), epsilon(1). CF(0) has three main subunits: a(1), b(2) and c(9-12). The alpha and beta chains form an alternating ring which encloses part of the gamma chain. CF(1) is attached to CF(0) by a central stalk formed by the gamma and epsilon chains, while a peripheral stalk is formed by the delta and b chains.

The protein localises to the cell inner membrane. The enzyme catalyses ATP + H2O + 4 H(+)(in) = ADP + phosphate + 5 H(+)(out). Its function is as follows. Produces ATP from ADP in the presence of a proton gradient across the membrane. The catalytic sites are hosted primarily by the beta subunits. The protein is ATP synthase subunit beta of Cupriavidus pinatubonensis (strain JMP 134 / LMG 1197) (Cupriavidus necator (strain JMP 134)).